We begin with the raw amino-acid sequence, 60 residues long: Large ribosomal subunit protein uL30 (60 aa).

This sequence belongs to the universal ribosomal protein uL30 family. As to quaternary structure, part of the 50S ribosomal subunit.

The polypeptide is Large ribosomal subunit protein uL30 (Streptococcus pneumoniae (strain Hungary19A-6)).